The sequence spans 318 residues: Non-homologous end joining protein Ku (318 aa).

The 184-residue stretch at 10-193 folds into the Ku domain; sequence AFGLVNVPVK…EVQIKPAELK (184 aa). The disordered stretch occupies residues 259 to 318; it reads SVKARKGGKSDSKDDSDSESDSKESKSDSKPAKKAPAKKAAAKKSTAKKAPAKKAAAKKS. Residues 266 to 289 show a composition bias toward basic and acidic residues; it reads GKSDSKDDSDSESDSKESKSDSKP. Basic residues predominate over residues 290–318; sequence AKKAPAKKAAAKKSTAKKAPAKKAAAKKS.

It belongs to the prokaryotic Ku family. As to quaternary structure, homodimer. Interacts with Sir2 and probably also with LigD; may form a trimeric complex during NHEJ.

With LigD forms a non-homologous end joining (NHEJ) repair enzyme which repairs blunt-end and 5'-overhang double strand breaks (DSB) with about 50% fidelity, and DSB with non-complementary 3' ends. Plays a partial role in NHEJ on 3'-overhang repair of complementary ends. NHEJ repairs DSB with blunt ends and 5' overhangs with a high level of nucleotide insertion/deletion, without a need for microhomology. This protein but not LigD also suppresses homologous recombination. Overexpression dramatically increases the efficiency of NHEJ with no effect on repair fidelity. The protein is Non-homologous end joining protein Ku of Mycolicibacterium smegmatis (strain ATCC 700084 / mc(2)155) (Mycobacterium smegmatis).